Reading from the N-terminus, the 206-residue chain is Heat shock protein beta-1 (206 aa).

An Omega-N-methylarginine modification is found at Arg-12. Position 13 is a phosphoserine (Ser-13). Residue Ser-15 is modified to Phosphoserine; by MAPKAPK2 and MAPKAPK3. The residue at position 27 (Ser-27) is a Phosphoserine. Residues 74 to 206 (RPAFSRALNR…GPESEQSGAK (133 aa)) are interaction with TGFB1I1. The sHSP domain maps to 80-188 (ALNRQLSSGV…QSAEITIPVT (109 aa)). Ser-86 is modified (phosphoserine; by MAPKAPK2, MAPKAPK3 and MAPKAPK5). Residues Ser-87, Ser-90, and Ser-102 each carry the phosphoserine modification. Position 127 is an N6-acetyllysine (Lys-127). At Thr-178 the chain carries Phosphothreonine. Phosphoserine occurs at positions 180 and 200.

The protein belongs to the small heat shock protein (HSP20) family. Homooligomer. Homodimer; becomes monomeric upon activation. Heterooligomer; with HSPB6. Associates with alpha- and beta-tubulin. Interacts with TGFB1I1. Interacts with CRYAB. Interacts with HSPB8. Interacts with HSPBAP1. In terms of processing, phosphorylated upon exposure to protein kinase C activators and heat shock. Phosphorylation by MAPKAPK2 and MAPKAPK3 in response to stress dissociates HSPB1 from large small heat-shock protein (sHsps) oligomers and impairs its chaperone activity and ability to protect against oxidative stress effectively. Phosphorylation by MAPKAPK5 in response to PKA stimulation induces F-actin rearrangement. In terms of tissue distribution, expressed in a variety of tissues. High levels in lung, adrenal, xiphoid, adipose tissue, heart and striated and smooth muscle, lower levels in the CNS. Adult levels are much higher in the slow-twitch soleus muscle than in the fast-twitch rectus femoris and extensor digitorum muscles.

It localises to the cytoplasm. The protein localises to the nucleus. It is found in the cytoskeleton. Its subcellular location is the spindle. In terms of biological role, small heat shock protein which functions as a molecular chaperone probably maintaining denatured proteins in a folding-competent state. Plays a role in stress resistance and actin organization. Through its molecular chaperone activity may regulate numerous biological processes including the phosphorylation and the axonal transport of neurofilament proteins. In Rattus norvegicus (Rat), this protein is Heat shock protein beta-1 (Hspb1).